A 378-amino-acid chain; its full sequence is Apoptosis-inducing factor 1 (378 aa).

The helical transmembrane segment at 7-25 threads the bilayer; the sequence is NIVVVGAGVFGVSVANHLY. FAD is bound by residues 12 to 16, R51, K56, and D283; that span reads GAGVF.

Belongs to the FAD-dependent oxidoreductase family. Requires FAD as cofactor.

It is found in the mitochondrion outer membrane. Its subcellular location is the nucleus. Functionally, putative FAD-dependent oxidoreductase involved in the resistance to cercosporin and other singlet oxygen-generating photosensitizers. Translocates from mitochondria to the nucleus under apoptotic conditions, where it degrades DNA and induces apoptosis. This is Apoptosis-inducing factor 1 (AIF1) from Saccharomyces cerevisiae (strain ATCC 204508 / S288c) (Baker's yeast).